Reading from the N-terminus, the 702-residue chain is Elongation factor G 1 (702 aa).

The 283-residue stretch at 8 to 290 folds into the tr-type G domain; the sequence is ERYRNIGISA…AVIDFLPSPV (283 aa). Residues 17 to 24, 88 to 92, and 142 to 145 contribute to the GTP site; these read AHIDAGKT, DTPGH, and NKMD.

The protein belongs to the TRAFAC class translation factor GTPase superfamily. Classic translation factor GTPase family. EF-G/EF-2 subfamily.

It is found in the cytoplasm. Its function is as follows. Catalyzes the GTP-dependent ribosomal translocation step during translation elongation. During this step, the ribosome changes from the pre-translocational (PRE) to the post-translocational (POST) state as the newly formed A-site-bound peptidyl-tRNA and P-site-bound deacylated tRNA move to the P and E sites, respectively. Catalyzes the coordinated movement of the two tRNA molecules, the mRNA and conformational changes in the ribosome. In Cupriavidus pinatubonensis (strain JMP 134 / LMG 1197) (Cupriavidus necator (strain JMP 134)), this protein is Elongation factor G 1.